Here is a 227-residue protein sequence, read N- to C-terminus: C4-dicarboxylate TRAP transporter small permease protein DctQ (227 aa).

Residues 1–7 lie on the Cytoplasmic side of the membrane; sequence MLRILDR. A helical transmembrane segment spans residues 8–28; it reads AEEVLIAALIATATVLIFVSV. The Periplasmic portion of the chain corresponds to 29 to 67; the sequence is THRFTLGFVADFVGFFRGHGMTGAAAAAKSLYTTLRGIN. The helical transmembrane segment at 68–88 threads the bilayer; that stretch reads LVWAQELCIILFVWMAKFGAA. Residues 89–112 lie on the Cytoplasmic side of the membrane; it reads YGVRTGIHVGIDVLINRLDAPKRR. Residues 113 to 133 form a helical membrane-spanning segment; the sequence is FFILLGLGAGALFTGIIATLG. Residues 134–149 lie on the Periplasmic side of the membrane; the sequence is ANFVLHMYHASSTSPD. A helical transmembrane segment spans residues 150–170; it reads LELPMWLVYLAIPMGSSLMCF. Topologically, residues 171 to 227 are cytoplasmic; it reads RFLQVAFGFARTGELPHHDHGHVDGVDTENEGIDAEGDVLLHSPLTPRDLVEKPKDN.

It belongs to the TRAP transporter small permease family. As to quaternary structure, the complex comprises the extracytoplasmic solute receptor protein DctP, and the two transmembrane proteins DctQ and DctM.

Its subcellular location is the cell inner membrane. Part of the tripartite ATP-independent periplasmic (TRAP) transport system DctPQM involved in C4-dicarboxylates uptake. This is C4-dicarboxylate TRAP transporter small permease protein DctQ from Rhodobacter capsulatus (Rhodopseudomonas capsulata).